A 973-amino-acid chain; its full sequence is UvrABC system protein A (973 aa).

34-41 (GLSGSGKS) lines the ATP pocket. 2 ABC transporter domains span residues 331–609 (WAKS…PKSL) and 629–958 (PKKK…QFLK). 662-669 (GVSGGGKS) is an ATP binding site. Residues 761–787 (CEACQGDGVIKIEMHFLPDVYVTCDVC) form a C4-type zinc finger.

This sequence belongs to the ABC transporter superfamily. UvrA family. In terms of assembly, forms a heterotetramer with UvrB during the search for lesions.

It is found in the cytoplasm. The UvrABC repair system catalyzes the recognition and processing of DNA lesions. UvrA is an ATPase and a DNA-binding protein. A damage recognition complex composed of 2 UvrA and 2 UvrB subunits scans DNA for abnormalities. When the presence of a lesion has been verified by UvrB, the UvrA molecules dissociate. The chain is UvrABC system protein A from Rhizobium meliloti (strain 1021) (Ensifer meliloti).